The sequence spans 151 residues: Ribosomal RNA large subunit methyltransferase H (151 aa).

Residues L73, G100, and 119–124 (LSDLTM) each bind S-adenosyl-L-methionine.

The protein belongs to the RNA methyltransferase RlmH family. Homodimer.

The protein localises to the cytoplasm. The enzyme catalyses pseudouridine(1915) in 23S rRNA + S-adenosyl-L-methionine = N(3)-methylpseudouridine(1915) in 23S rRNA + S-adenosyl-L-homocysteine + H(+). Its function is as follows. Specifically methylates the pseudouridine at position 1915 (m3Psi1915) in 23S rRNA. This Aliarcobacter butzleri (strain RM4018) (Arcobacter butzleri) protein is Ribosomal RNA large subunit methyltransferase H.